Reading from the N-terminus, the 1048-residue chain is Integrin alpha-V (1048 aa).

Residues 1–30 (MAFPPRRRLRLGPRGLPLLLSGLLLPLCRA) form the signal peptide. Residues 31–992 (FNLDVESPAE…WGIQPAPMPV (962 aa)) lie on the Extracellular side of the membrane. FG-GAP repeat units lie at residues 32–98 (NLDV…RRCQ), 109–170 (DYAK…VEYA), 173–225 (RSKN…VSKY), 237–291 (QLAT…GKNM), 292–357 (SSLH…GDFQ), 358–415 (TIKL…GLNA), and 419–482 (QILE…VYPS). An N-linked (GlcNAc...) asparagine glycan is attached at N74. 3 disulfide bridges follow: C89-C97, C138-C158, and C172-C185. Positions 260, 262, 264, 266, and 268 each coordinate Ca(2+). 2 N-linked (GlcNAc...) asparagine glycosylation sites follow: N290 and N296. Ca(2+)-binding residues include D314, N316, D318, Y320, D322, D379, D381, D383, F385, D387, D443, D445, N447, Y449, and D451. N-linked (GlcNAc...) asparagine glycosylation occurs at N488. 2 disulfide bridges follow: C491–C502 and C508–C565. Residues N554 and N615 are each glycosylated (N-linked (GlcNAc...) asparagine). Disulfide bonds link C626–C632 and C698–C711. N-linked (GlcNAc...) asparagine glycosylation is found at N704, N835, N851, and N874. 2 disulfides stabilise this stretch: C852/C914 and C904/C909. 3 N-linked (GlcNAc...) asparagine glycosylation sites follow: N945, N973, and N980. A helical membrane pass occupies residues 993–1016 (PVWVIILAVLAGLLLLAVLVFVMY). Residues 1017–1048 (RMGFFKRVRPPQEEQEREQLQPHENGEGNSET) lie on the Cytoplasmic side of the membrane. Residues 1019–1023 (GFFKR) carry the GFFKR motif motif. Positions 1027 to 1042 (PQEEQEREQLQPHENG) are enriched in basic and acidic residues. Residues 1027-1048 (PQEEQEREQLQPHENGEGNSET) form a disordered region.

This sequence belongs to the integrin alpha chain family. As to quaternary structure, heterodimer of an alpha and a beta subunit. The alpha subunit is composed of a heavy and a light chain linked by a disulfide bond. Alpha-V (ITGAV) associates with either beta-1 (ITGB1), beta-3 (ITGB3), beta-5 (ITGB5), beta-6 (ITGB6) or beta-8 (ITGB8). Interacts with RAB25. Interacts with CIB1. Integrins ITGAV:ITGB3 and ITGAV:ITGB5 interact with FBLN5 (via N-terminus). ITGAV:ITGB3 and ITGAV:ITGB5 interact with CCN3. ITGAV:ITGB3 interacts with ADGRA2. ITGAV:ITGB3 interacts with FGF2; it is likely that FGF2 can simultaneously bind ITGAV:ITGB3 and FGF receptors. ITGAV:ITGB3 interacts with SELP (via C-type lectin domain); the interaction mediates cell-cell interaction and adhesion. ITGAV:ITGB3 is found in a ternary complex with CX3CR1 and CX3CL1. ITGAV:ITGB3 is found in a ternary complex with NRG1 and ERBB3. ITGAV:ITGB3 is found in a ternary complex with FGF1 and FGFR1. ITGAV:ITGB3 is found in a ternary complex with IGF1 and IGF1R. ITGAV:ITGB3 interacts with IGF2. ITGAV:ITGB3 and ITGAV:ITGB6 interact with FBN1. ITGAV:ITGB3 interacts with CD9, CD81 and CD151 (via second extracellular domain). ITGAV:ITGB6 interacts with TGFB1. ITGAV:ITGB3 interacts with PTN. Forms a complex with PTPRZ1 and PTN that stimulates endothelial cell migration through ITGB3 'Tyr-773' phosphorylation. Interacts with TM4SF19. In terms of assembly, (Microbial infection) Alpha-V/beta-6 and alpha-V/beta-3 bind to foot-and-mouth disease virus (FMDV) VP1 protein and acts as a receptor for this virus.

The protein localises to the cell membrane. It localises to the cell junction. The protein resides in the focal adhesion. Its function is as follows. The alpha-V (ITGAV) integrins are receptors for vitronectin, cytotactin, fibronectin, fibrinogen, laminin, matrix metalloproteinase-2, osteopontin, osteomodulin, prothrombin, thrombospondin, TGFB1 and vWF. They recognize the sequence R-G-D in a wide array of ligands. Alpha-V integrins may play a role in embryo implantation, angiogenesis and wound healing. ITGAV:ITGB3 binds to fractalkine (CX3CL1) and may act as its coreceptor in CX3CR1-dependent fractalkine signaling. ITGAV:ITGB3 binds to NRG1 (via EGF domain) and this binding is essential for NRG1-ERBB signaling. ITGAV:ITGB3 binds to FGF1 and this binding is essential for FGF1 signaling. ITGAV:ITGB3 binds to FGF2 and this binding is essential for FGF2 signaling. ITGAV:ITGB3 binds to IGF1 and this binding is essential for IGF1 signaling. ITGAV:ITGB3 binds to IGF2 and this binding is essential for IGF2 signaling. ITGAV:ITGB3 binds to IL1B and this binding is essential for IL1B signaling. ITGAV:ITGB3 binds to PLA2G2A via a site (site 2) which is distinct from the classical ligand-binding site (site 1) and this induces integrin conformational changes and enhanced ligand binding to site 1. ITGAV:ITGB3 and ITGAV:ITGB6 act as receptors for fibrillin-1 (FBN1) and mediate R-G-D-dependent cell adhesion to FBN1. Integrin alpha-V/beta-6 or alpha-V/beta-8 (ITGAV:ITGB6 or ITGAV:ITGB8) mediates R-G-D-dependent release of transforming growth factor beta-1 (TGF-beta-1) from regulatory Latency-associated peptide (LAP), thereby playing a key role in TGF-beta-1 activation. ITGAV:ITGB3 acts as a receptor for CD40LG. ITGAV:ITGB3 acts as a receptor for IBSP and promotes cell adhesion and migration to IBSP. The sequence is that of Integrin alpha-V (ITGAV) from Bos taurus (Bovine).